Consider the following 93-residue polypeptide: RNA-binding protein Hfq (93 aa).

The Sm domain occupies 9–68 (DPYLNALRRERIPVSIYLVNGIKLQGQIESFDQFVILLKNTVSQMVYKHAISTVVPARAI). The segment covering 70–81 (HNNNSNHAHQAA) has biased composition (low complexity). The tract at residues 70-93 (HNNNSNHAHQAAPVQSAEVVEKVE) is disordered.

This sequence belongs to the Hfq family. In terms of assembly, homohexamer.

In terms of biological role, RNA chaperone that binds small regulatory RNA (sRNAs) and mRNAs to facilitate mRNA translational regulation in response to envelope stress, environmental stress and changes in metabolite concentrations. Also binds with high specificity to tRNAs. In Glaesserella parasuis serovar 5 (strain SH0165) (Haemophilus parasuis), this protein is RNA-binding protein Hfq.